Here is a 99-residue protein sequence, read N- to C-terminus: CLAVATA3/ESR (CLE)-related protein 17 (99 aa).

An N-terminal signal peptide occupies residues 1 to 21 (MTHVLVRRQGQGKKRRWDVNM). A compositionally biased stretch (basic and acidic residues) spans 77 to 89 (LSRDDIYGDDKRV). The disordered stretch occupies residues 77–99 (LSRDDIYGDDKRVVHTGPNPLHN). Residue Pro-94 is modified to Hydroxyproline. A glycan (O-linked (Ara...) hydroxyproline) is linked at Pro-94.

This sequence belongs to the CLV3/ESR signal peptide family. The O-glycosylation (arabinosylation) of the hydroxyproline Pro-94 enhances binding affinity of the CLE17p peptide for its receptor. As to expression, mostly expressed in seedlings, roots, flowers, stems and apex, and, to a lower extent, in leaves and siliques.

The protein localises to the secreted. It localises to the extracellular space. Its function is as follows. Extracellular signal peptide that regulates cell fate. Represses root apical meristem maintenance. Regulates the transition of protophloem cells from proliferation to differentiation, thus impinging on postembryonic growth capacity of the root meristem; this signaling pathway requires CRN and CLV2. The protein is CLAVATA3/ESR (CLE)-related protein 17 of Arabidopsis thaliana (Mouse-ear cress).